Here is a 1941-residue protein sequence, read N- to C-terminus: Myosin-2 (1941 aa).

The Myosin N-terminal SH3-like domain occupies 33–82 (DAKTSVFVAEPKESFVKGTIQSREGGKVTVKTEGGATLTVKDDQVFPMNP). Residues Thr-64 and Thr-69 each carry the phosphothreonine modification. One can recognise a Myosin motor domain in the interval 86-784 (DKIEDMAMMT…LLGLLEEMRD (699 aa)). Residue Lys-130 is modified to N6,N6,N6-trimethyllysine. 179–186 (GESGAGKT) contacts ATP. Phosphotyrosine is present on Tyr-389. Ser-392 bears the Phosphoserine mark. At Thr-419 the chain carries Phosphothreonine. At Ser-625 the chain carries Phosphoserine. Positions 661-683 (LNKLMTNLRSTHPHFVRCIIPNE) are actin-binding. A Pros-methylhistidine modification is found at His-759. An actin-binding region spans residues 763 to 777 (KFGHTKVFFKAGLLG). Positions 787 to 816 (LAQLITRTQARCRGFLARVEYQRMVERREA) constitute an IQ domain. Residues 845 to 1941 (LLKSAETEKE…EVHTKVISEE (1097 aa)) adopt a coiled-coil conformation. A phosphoserine mark is found at Ser-1094 and Ser-1098. Disordered stretches follow at residues 1128–1149 (IEAE…SREL) and 1155–1174 (RLEE…KKRE). A compositionally biased stretch (basic and acidic residues) spans 1130-1149 (AERASRAKAEKQRSDLSREL). Ser-1164 and Ser-1239 each carry phosphoserine. Thr-1243 is subject to Phosphothreonine. A Phosphoserine modification is found at Ser-1245. Residue Thr-1257 is modified to Phosphothreonine. Residue Ser-1263 is modified to Phosphoserine. Residue Thr-1288 is modified to Phosphothreonine. 4 positions are modified to phosphoserine: Ser-1290, Ser-1294, Ser-1305, and Ser-1308. A Phosphothreonine modification is found at Thr-1469. Residue Ser-1476 is modified to Phosphoserine. Tyr-1494 carries the phosphotyrosine modification. Ser-1497 carries the phosphoserine modification. Thr-1503 is subject to Phosphothreonine. Position 1516 is a phosphoserine (Ser-1516). Position 1519 is a phosphothreonine (Thr-1519). A phosphoserine mark is found at Ser-1556, Ser-1576, Ser-1602, Ser-1605, Ser-1716, and Ser-1728. Phosphothreonine is present on residues Thr-1732 and Thr-1738. Phosphoserine is present on Ser-1741.

It belongs to the TRAFAC class myosin-kinesin ATPase superfamily. Myosin family. In terms of assembly, muscle myosin is a hexameric protein that consists of 2 heavy chain subunits (MHC), 2 alkali light chain subunits (MLC) and 2 regulatory light chain subunits (MLC-2). Interacts with GCSAM.

The protein resides in the cytoplasm. Its subcellular location is the myofibril. Functionally, myosins are actin-based motor molecules with ATPase activity essential for muscle contraction. The sequence is that of Myosin-2 from Homo sapiens (Human).